We begin with the raw amino-acid sequence, 142 residues long: Complexin (142 aa).

Disordered regions lie at residues 13–70 (QLSA…MRQD) and 83–105 (IVEA…PEEL). Residues 29 to 138 (GDDKEKAEEE…NELKTQIEGK (110 aa)) adopt a coiled-coil conformation. Positions 31–70 (DKEKAEEEERERQEAIKEAEDRRKEKHRKMEEEREKMRQD) are enriched in basic and acidic residues. C139 carries the cysteine methyl ester modification. The S-farnesyl cysteine moiety is linked to residue C139. The propeptide at 140-142 (VMQ) is removed in mature form.

This sequence belongs to the complexin/synaphin family. Binds to the SNARE core complex containing Snap25, synaptobrevin and Syx1A.

It localises to the membrane. Its function is as follows. Positively regulates a late step in synaptic vesicle exocytosis. This is Complexin (cpx) from Drosophila melanogaster (Fruit fly).